The sequence spans 313 residues: GTP cyclohydrolase MptA (313 aa).

This sequence belongs to the GTP cyclohydrolase IV family. In terms of assembly, homodimer. It depends on Fe(2+) as a cofactor.

It carries out the reaction GTP + H2O = 7,8-dihydroneopterin 2',3'-cyclic phosphate + formate + diphosphate + H(+). It participates in cofactor biosynthesis; 5,6,7,8-tetrahydromethanopterin biosynthesis. In terms of biological role, converts GTP to 7,8-dihydro-D-neopterin 2',3'-cyclic phosphate, the first intermediate in the biosynthesis of coenzyme methanopterin. The protein is GTP cyclohydrolase MptA of Methanoculleus marisnigri (strain ATCC 35101 / DSM 1498 / JR1).